Consider the following 921-residue polypeptide: TRPM8 channel-associated factor 1 (921 aa).

A Peptidase M60 domain is found at 542–841 (YCWMSTGLYI…TYLQLQEAFG (300 aa)).

Belongs to the TCAF family. In terms of assembly, interacts with TRPM8 (via N-terminus and C-terminus domains); the interaction inhibits TRPM8 channel activity. Interacts with TRPV6.

Its subcellular location is the cell membrane. Its function is as follows. Positively regulates the plasma membrane cation channel TRPM8 activity. Involved in the recruitment of TRPM8 to the cell surface. Promotes prostate cancer cell migration inhibition in a TRPM8-dependent manner. In Bos taurus (Bovine), this protein is TRPM8 channel-associated factor 1.